The primary structure comprises 330 residues: Phosphate acyltransferase (330 aa).

This sequence belongs to the PlsX family. In terms of assembly, homodimer. Probably interacts with PlsY.

It is found in the cytoplasm. It catalyses the reaction a fatty acyl-[ACP] + phosphate = an acyl phosphate + holo-[ACP]. It participates in lipid metabolism; phospholipid metabolism. In terms of biological role, catalyzes the reversible formation of acyl-phosphate (acyl-PO(4)) from acyl-[acyl-carrier-protein] (acyl-ACP). This enzyme utilizes acyl-ACP as fatty acyl donor, but not acyl-CoA. The sequence is that of Phosphate acyltransferase from Bacillus anthracis (strain A0248).